A 445-amino-acid chain; its full sequence is Anthranilate N-benzoyltransferase protein 3 (445 aa).

Active-site proton acceptor residues include His164 and Asp392.

This sequence belongs to the plant acyltransferase family. In terms of processing, N-terminus is blocked.

The enzyme catalyses anthranilate + benzoyl-CoA = N-benzoylanthranilate + CoA. Its pathway is phytoalexin biosynthesis; methoxydianthramide B biosynthesis. In terms of biological role, catalyzes the formation of N-benzoylanthranilate, in the course of methoxydianthramide B, a phytoalexin. Phytoalexins are produced in response to infection by parasites, and are essential for the expression of disease resistance. This Dianthus caryophyllus (Carnation) protein is Anthranilate N-benzoyltransferase protein 3 (HCBT3).